The sequence spans 451 residues: MSKQYFGTDGIRGRANRFPMTAEVAMRVGMAAGLSFQNGSHRHRVVLGKDTRLSGYMIENAMVAGFCAAGMDVFLLGPIPTPAVAMLVRSLRADIGVMISASHNPYHDNGIKLFGPDGYKLSDEIENRIEAMLDRDVELALADSESLGRAKRVDGVHDRYIEFAKRTLPRDMSLSGLRVVIDCANGAAYKVAPAALWELGAEVVPIYVDPNGFNVNEECGSTHPMSLAKKVHEVRADIGIALDGDADRVVIVDENGTIIDGDQIMALIAESWHENEKLIGGGIVATVMSNLGLERFLRGRGLELHRTKVGDRYVVEHMREHGLNIGGEQSGHVVLSDFSTSGDGLVTALQVLAHIKRLNKPASEVCRKFEPVPQVLKNVRISGGKPLEAASVKAAIADAQAQLGDTGRLVIRPSGTEPLIRVMAEGDDPELVRKMVDSIVDAIADARTAAA.

Catalysis depends on Ser-102, which acts as the Phosphoserine intermediate. The Mg(2+) site is built by Ser-102, Asp-243, Asp-245, and Asp-247. Ser-102 bears the Phosphoserine mark.

This sequence belongs to the phosphohexose mutase family. It depends on Mg(2+) as a cofactor. Activated by phosphorylation.

The enzyme catalyses alpha-D-glucosamine 1-phosphate = D-glucosamine 6-phosphate. In terms of biological role, catalyzes the conversion of glucosamine-6-phosphate to glucosamine-1-phosphate. This chain is Phosphoglucosamine mutase, found in Chelativorans sp. (strain BNC1).